The primary structure comprises 230 residues: Sugar fermentation stimulation protein homolog (230 aa).

It belongs to the SfsA family.

This is Sugar fermentation stimulation protein homolog from Clostridium kluyveri (strain NBRC 12016).